The primary structure comprises 1388 residues: Rho-associated protein kinase 2 (1388 aa).

Residues 1 to 27 (MSRPPPTGKMPGAPETAPGDGAGASRQ) are disordered. One can recognise a Protein kinase domain in the interval 92 to 354 (YDVVKVIGRG…VEEIRQHPFF (263 aa)). ATP contacts are provided by residues 98–106 (IGRGAFGEV) and Lys121. Residue Asp214 is the Proton acceptor of the active site. The 69-residue stretch at 357-425 (DQWHWDNIRE…YRENLLLSDS (69 aa)) folds into the AGC-kinase C-terminal domain. Positions 363 to 784 (NIRETAAPVV…INELLKQKDV (422 aa)) are interaction with PPP1R12A. Positions 373–420 (PELSSDIDSSNFDDIEDDKGDVETFPIPKAFVGNQLPFIGFTYYRENL) are interaction with NPM1. Thr414 carries the phosphothreonine; by ROCK2 modification. 2 coiled-coil regions span residues 429 to 1024 (RETD…EKQL) and 1053 to 1131 (DTDV…IGLD). The region spanning 497-573 (ALRQLEREKA…LDETNALLRT (77 aa)) is the REM-1 domain. Tyr722 bears the Phosphotyrosine; by SRC mark. The 69-residue stretch at 979–1047 (TSDVANLANE…LAEIMNRKEP (69 aa)) folds into the RhoBD domain. An RHOA binding region spans residues 979–1047 (TSDVANLANE…LAEIMNRKEP (69 aa)). Residue Ser1137 is modified to Phosphoserine. The 200-residue stretch at 1150-1349 (ESRLEGWLSL…WVSRLVKKIP (200 aa)) folds into the PH domain. The residue at position 1212 (Thr1212) is a Phosphothreonine. A Phorbol-ester/DAG-type zinc finger spans residues 1260-1315 (GHEFIPTLYHFPTNCEACMKPLWHMFKPPPALECRRCHIKCHKDHMDKKEEIIAPC). Residues 1345–1388 (VKKIPKKPPAPDPFARSSPRTSMKIQQNQSIRRPSRQLAPNKPS) are disordered. Ser1362 and Ser1374 each carry phosphoserine. Residues 1362-1376 (SPRTSMKIQQNQSIR) show a composition bias toward polar residues.

It belongs to the protein kinase superfamily. AGC Ser/Thr protein kinase family. In terms of assembly, homodimer. Interacts with IRS1. Interacts with RAF1. Interacts with RHOA (activated by GTP), RHOB and RHOC. Interacts with PPP1R12A. Interacts with EP300. Interacts with CHORDC1. Interacts with BRCA2. Interacts with NPM1; this interaction enhances ROCK2 activity. Interacts with SORL1. Interacts with PJVK. The cofactor is Mg(2+). In terms of processing, phosphorylation at Tyr-722 reduces its binding to RHOA and is crucial for focal adhesion dynamics. Dephosphorylation by PTPN11 stimulates its RHOA binding activity. Cleaved by granzyme B during apoptosis. This leads to constitutive activation of the kinase and membrane blebbing. Expressed in the brain (at protein level).

It is found in the cytoplasm. The protein resides in the cell membrane. It localises to the nucleus. The protein localises to the cytoskeleton. Its subcellular location is the microtubule organizing center. It is found in the centrosome. It carries out the reaction L-seryl-[protein] + ATP = O-phospho-L-seryl-[protein] + ADP + H(+). The enzyme catalyses L-threonyl-[protein] + ATP = O-phospho-L-threonyl-[protein] + ADP + H(+). Activated by RHOA binding. Inhibited by Y-27632. Functionally, protein kinase which is a key regulator of actin cytoskeleton and cell polarity. Involved in regulation of smooth muscle contraction, actin cytoskeleton organization, stress fiber and focal adhesion formation, neurite retraction, cell adhesion and motility via phosphorylation of ADD1, BRCA2, CNN1, EZR, DPYSL2, EP300, MSN, MYL9/MLC2, NPM1, RDX, PPP1R12A and VIM. Phosphorylates SORL1 and IRF4. Acts as a negative regulator of VEGF-induced angiogenic endothelial cell activation. Positively regulates the activation of p42/MAPK1-p44/MAPK3 and of p90RSK/RPS6KA1 during myogenic differentiation. Plays an important role in the timely initiation of centrosome duplication. Inhibits keratinocyte terminal differentiation. May regulate closure of the eyelids and ventral body wall through organization of actomyosin bundles. Plays a critical role in the regulation of spine and synaptic properties in the hippocampus. Plays an important role in generating the circadian rhythm of the aortic myofilament Ca(2+) sensitivity and vascular contractility by modulating the myosin light chain phosphorylation. This is Rho-associated protein kinase 2 (ROCK2) from Homo sapiens (Human).